We begin with the raw amino-acid sequence, 282 residues long: Acyl-CoA-binding domain-containing protein 6 (282 aa).

Residues 1–34 (MATPFLPAGATTGDSGGELSSGDDSGDLESFQTP) form a disordered region. Ser-41 is subject to Phosphoserine. An ACB domain is found at 42 to 127 (LAELFEKAAA…VKKLDPGWNP (86 aa)). Residues 69-73 (YARYK) and Lys-95 each bind an acyl-CoA. Ser-106 carries the phosphoserine modification. An an acyl-CoA-binding site is contributed by Tyr-114. ANK repeat units follow at residues 191–220 (EGRALLHWACDRGHKELVKVLLQCEAGINC) and 224–253 (EGQTALHYAAACEFSDIVELLLQSGADPTL).

In terms of assembly, monomer.

It localises to the cytoplasm. Its subcellular location is the nucleus. Its function is as follows. Binds long-chain acyl-coenzyme A molecules with a strong preference for unsaturated C18:1-CoA, lower affinity for unsaturated C20:4-CoA, and very weak affinity for saturated C16:0-CoA. Does not bind fatty acids. Plays a role in protein N-myristoylation. The sequence is that of Acyl-CoA-binding domain-containing protein 6 (Acbd6) from Rattus norvegicus (Rat).